The following is a 318-amino-acid chain: tRNA-modifying protein YgfZ (318 aa).

Folate is bound by residues Trp28 and Trp182.

This sequence belongs to the tRNA-modifying YgfZ family.

The protein resides in the cytoplasm. In terms of biological role, folate-binding protein involved in regulating the level of ATP-DnaA and in the modification of some tRNAs. It is probably a key factor in regulatory networks that act via tRNA modification, such as initiation of chromosomal replication. The chain is tRNA-modifying protein YgfZ from Aliivibrio fischeri (strain MJ11) (Vibrio fischeri).